We begin with the raw amino-acid sequence, 132 residues long: UPF0329 protein ECU07_0050/ECU09_2020 (132 aa).

It belongs to the UPF0329 family.

The protein is UPF0329 protein ECU07_0050/ECU09_2020 of Encephalitozoon cuniculi (strain GB-M1) (Microsporidian parasite).